A 135-amino-acid polypeptide reads, in one-letter code: MIDVRCICAIGQRGQLGLNGHLPWEGNTDPLFVEDVTRFFALTMGHVLIAGPKTVASVPEFAFKDRTIDVIRSHEDPEAVLKRYPGRRIFVGGGIAVWNVYAKYIQHWDVTRLPYDGEADRWFDPAWLVGGPLRS.

Residues Ala-9, 16–21, 52–54, and 93–97 contribute to the NADP(+) site; these read LGLNGH, PKT, and GGIAV.

As to quaternary structure, homodimer.

It carries out the reaction 5,6,7,8-tetrahydromethanopterin + NAD(+) = 7,8-dihydromethanopterin + NADH + H(+). The catalysed reaction is 5,6,7,8-tetrahydromethanopterin + NADP(+) = 7,8-dihydromethanopterin + NADPH + H(+). Its pathway is cofactor biosynthesis; 5,6,7,8-tetrahydromethanopterin biosynthesis. In terms of biological role, catalyzes the reduction of dihydromethanopterin (H(2)MPT) to tetrahydromethanopterin (H(4)MPT). Shows preference for NADPH rather than NADH as electron donor. Does not reduce dihydrofolate. This Methylorubrum extorquens (strain ATCC 14718 / DSM 1338 / JCM 2805 / NCIMB 9133 / AM1) (Methylobacterium extorquens) protein is Dihydromethanopterin reductase (dmrA).